Consider the following 202-residue polypeptide: Dephospho-CoA kinase (202 aa).

The DPCK domain maps to 6-202 (KISVTGDPSS…QCFKALKGTI (197 aa)). Residue 14-19 (SSGKTE) participates in ATP binding.

This sequence belongs to the CoaE family.

Its subcellular location is the cytoplasm. The enzyme catalyses 3'-dephospho-CoA + ATP = ADP + CoA + H(+). The protein operates within cofactor biosynthesis; coenzyme A biosynthesis; CoA from (R)-pantothenate: step 5/5. Functionally, catalyzes the phosphorylation of the 3'-hydroxyl group of dephosphocoenzyme A to form coenzyme A. The sequence is that of Dephospho-CoA kinase from Chlamydia trachomatis serovar D (strain ATCC VR-885 / DSM 19411 / UW-3/Cx).